Here is a 313-residue protein sequence, read N- to C-terminus: Aspartate carbamoyltransferase catalytic subunit (313 aa).

Carbamoyl phosphate-binding residues include Arg-66 and Thr-67. Lys-94 provides a ligand contact to L-aspartate. 3 residues coordinate carbamoyl phosphate: Arg-116, His-144, and Gln-147. L-aspartate contacts are provided by Arg-177 and Arg-231. Positions 272 and 273 each coordinate carbamoyl phosphate.

The protein belongs to the aspartate/ornithine carbamoyltransferase superfamily. ATCase family. Heterododecamer (2C3:3R2) of six catalytic PyrB chains organized as two trimers (C3), and six regulatory PyrI chains organized as three dimers (R2).

It catalyses the reaction carbamoyl phosphate + L-aspartate = N-carbamoyl-L-aspartate + phosphate + H(+). It participates in pyrimidine metabolism; UMP biosynthesis via de novo pathway; (S)-dihydroorotate from bicarbonate: step 2/3. Its function is as follows. Catalyzes the condensation of carbamoyl phosphate and aspartate to form carbamoyl aspartate and inorganic phosphate, the committed step in the de novo pyrimidine nucleotide biosynthesis pathway. The protein is Aspartate carbamoyltransferase catalytic subunit of Pelagibacter ubique (strain HTCC1062).